We begin with the raw amino-acid sequence, 175 residues long: Shikimate kinase (175 aa).

Residue 17-22 participates in ATP binding; that stretch reads GAGKST. S21 lines the Mg(2+) pocket. Residues D39, R63, and G85 each coordinate substrate. Residue R123 participates in ATP binding. Residue R142 coordinates substrate. ATP is bound at residue Q159.

This sequence belongs to the shikimate kinase family. In terms of assembly, monomer. Requires Mg(2+) as cofactor.

Its subcellular location is the cytoplasm. The catalysed reaction is shikimate + ATP = 3-phosphoshikimate + ADP + H(+). Its pathway is metabolic intermediate biosynthesis; chorismate biosynthesis; chorismate from D-erythrose 4-phosphate and phosphoenolpyruvate: step 5/7. In terms of biological role, catalyzes the specific phosphorylation of the 3-hydroxyl group of shikimic acid using ATP as a cosubstrate. The polypeptide is Shikimate kinase (Photobacterium profundum (strain SS9)).